We begin with the raw amino-acid sequence, 261 residues long: Acyl-[acyl-carrier-protein]--UDP-N-acetylglucosamine O-acyltransferase (261 aa).

Belongs to the transferase hexapeptide repeat family. LpxA subfamily. As to quaternary structure, homotrimer.

The protein localises to the cytoplasm. It catalyses the reaction a (3R)-hydroxyacyl-[ACP] + UDP-N-acetyl-alpha-D-glucosamine = a UDP-3-O-[(3R)-3-hydroxyacyl]-N-acetyl-alpha-D-glucosamine + holo-[ACP]. It participates in glycolipid biosynthesis; lipid IV(A) biosynthesis; lipid IV(A) from (3R)-3-hydroxytetradecanoyl-[acyl-carrier-protein] and UDP-N-acetyl-alpha-D-glucosamine: step 1/6. Its function is as follows. Involved in the biosynthesis of lipid A, a phosphorylated glycolipid that anchors the lipopolysaccharide to the outer membrane of the cell. The sequence is that of Acyl-[acyl-carrier-protein]--UDP-N-acetylglucosamine O-acyltransferase from Sulfurimonas denitrificans (strain ATCC 33889 / DSM 1251) (Thiomicrospira denitrificans (strain ATCC 33889 / DSM 1251)).